The sequence spans 502 residues: Glucose-6-phosphate isomerase (502 aa).

Glu-331 (proton donor) is an active-site residue. Active-site residues include His-362 and Lys-471.

Belongs to the GPI family.

The protein resides in the cytoplasm. It catalyses the reaction alpha-D-glucose 6-phosphate = beta-D-fructose 6-phosphate. It functions in the pathway carbohydrate biosynthesis; gluconeogenesis. The protein operates within carbohydrate degradation; glycolysis; D-glyceraldehyde 3-phosphate and glycerone phosphate from D-glucose: step 2/4. Functionally, catalyzes the reversible isomerization of glucose-6-phosphate to fructose-6-phosphate. This chain is Glucose-6-phosphate isomerase, found in Xylella fastidiosa (strain M12).